A 62-amino-acid polypeptide reads, in one-letter code: Short neurotoxin 2 (62 aa).

Residues 1–20 form a disordered region; it reads MTCYNQQSSEAKTTTTCSGG. 4 cysteine pairs are disulfide-bonded: C3–C24, C17–C41, C43–C54, and C55–C60.

It belongs to the three-finger toxin family. Short-chain subfamily. Type I alpha-neurotoxin sub-subfamily. In terms of tissue distribution, expressed by the venom gland.

It localises to the secreted. In terms of biological role, binds to muscle nicotinic acetylcholine receptor (nAChR) and inhibit acetylcholine from binding to the receptor, thereby impairing neuromuscular transmission. In Oxyuranus scutellatus scutellatus (Australian taipan), this protein is Short neurotoxin 2.